The sequence spans 297 residues: uncharacterized protein (297 aa).

9 helical membrane passes run 1–21, 32–52, 72–92, 98–118, 120–140, 194–214, 218–238, 253–273, and 274–294; these read MSWI…LGII, GSIL…IYVY, AMAL…NIPS, VLFF…YGGI, LIHK…ATGI, ILIE…IFAI, VYII…LFFC, LALI…IEIP, and AYIS…ASIL.

This sequence belongs to the TerC family.

It localises to the cell membrane. This is an uncharacterized protein from Rickettsia prowazekii (strain Madrid E).